The primary structure comprises 190 residues: Movement protein (190 aa).

The protein belongs to the tombusvirus/aureusvirus movement protein p22 family.

It is found in the host membrane. Functionally, transports viral genome to neighboring plant cells directly through plasmosdesmata, without any budding. The movement protein allows efficient cell to cell propagation, by bypassing the host cell wall barrier. In Cucumber necrosis virus (CNV), this protein is Movement protein.